A 463-amino-acid polypeptide reads, in one-letter code: Glycine--tRNA ligase (463 aa).

Substrate contacts are provided by arginine 98 and glutamate 170. Residues 202-204 (RNE), 212-217 (FRTREF), 287-288 (EL), and 331-334 (GIER) contribute to the ATP site. 217-221 (FEQFE) contributes to the substrate binding site. 327–331 (EPSLG) is a substrate binding site.

Belongs to the class-II aminoacyl-tRNA synthetase family. Homodimer.

It localises to the cytoplasm. The catalysed reaction is tRNA(Gly) + glycine + ATP = glycyl-tRNA(Gly) + AMP + diphosphate. Catalyzes the attachment of glycine to tRNA(Gly). This Mycoplasmoides gallisepticum (strain R(low / passage 15 / clone 2)) (Mycoplasma gallisepticum) protein is Glycine--tRNA ligase.